The sequence spans 455 residues: 1-deoxy-D-xylulose 5-phosphate reductoisomerase (455 aa).

T30, G31, S32, I33, Q63, and N159 together coordinate NADPH. K160 lines the 1-deoxy-D-xylulose 5-phosphate pocket. E161 is an NADPH binding site. Residue D185 participates in Mn(2+) binding. 1-deoxy-D-xylulose 5-phosphate-binding residues include S186 and E187. E187 contacts Mn(2+). Polar residues predominate over residues 205 to 214; the sequence is YATAKQSIQP. Residues 205-233 are disordered; the sequence is YATAKQSIQPESVRATDPPSSTTDSPAKT. Positions 246 and 269 each coordinate 1-deoxy-D-xylulose 5-phosphate. G275 is a binding site for NADPH. Positions 282, 287, 288, and 291 each coordinate 1-deoxy-D-xylulose 5-phosphate. E291 provides a ligand contact to Mn(2+).

This sequence belongs to the DXR family. It depends on Mg(2+) as a cofactor. Requires Mn(2+) as cofactor.

The enzyme catalyses 2-C-methyl-D-erythritol 4-phosphate + NADP(+) = 1-deoxy-D-xylulose 5-phosphate + NADPH + H(+). Its pathway is isoprenoid biosynthesis; isopentenyl diphosphate biosynthesis via DXP pathway; isopentenyl diphosphate from 1-deoxy-D-xylulose 5-phosphate: step 1/6. Its function is as follows. Catalyzes the NADPH-dependent rearrangement and reduction of 1-deoxy-D-xylulose-5-phosphate (DXP) to 2-C-methyl-D-erythritol 4-phosphate (MEP). The polypeptide is 1-deoxy-D-xylulose 5-phosphate reductoisomerase (Rhodopirellula baltica (strain DSM 10527 / NCIMB 13988 / SH1)).